Here is a 415-residue protein sequence, read N- to C-terminus: Serine/threonine-protein kinase H1 homolog (415 aa).

Positions 1–70 (MGCMSSKLVP…SNRKVKKYRD (70 aa)) are disordered. A compositionally biased stretch (basic and acidic residues) spans 41–50 (GPRDPTKDPK). A Protein kinase domain is found at 80 to 334 (YDIKALIGRG…AADALKHQWL (255 aa)). ATP is bound by residues 86 to 94 (IGRGNFSKV) and lysine 109. The active-site Proton acceptor is aspartate 198. Positions 353–362 (NLIHRQSTRA) are enriched in polar residues. A disordered region spans residues 353-415 (NLIHRQSTRA…DVQADLASLG (63 aa)). The segment covering 363-385 (NSTKSAKSTRSTKSNKSNRSGRS) has biased composition (low complexity). A compositionally biased stretch (basic and acidic residues) spans 386–406 (LRSEHRRVMPDEIDELHRDPD).

This sequence belongs to the protein kinase superfamily. CAMK Ser/Thr protein kinase family.

It carries out the reaction L-seryl-[protein] + ATP = O-phospho-L-seryl-[protein] + ADP + H(+). The catalysed reaction is L-threonyl-[protein] + ATP = O-phospho-L-threonyl-[protein] + ADP + H(+). The polypeptide is Serine/threonine-protein kinase H1 homolog (PSKH1) (Pinctada fucata (Akoya pearl oyster)).